The sequence spans 389 residues: Sulfate adenylyltransferase (389 aa).

It belongs to the sulfate adenylyltransferase family.

The catalysed reaction is sulfate + ATP + H(+) = adenosine 5'-phosphosulfate + diphosphate. It participates in sulfur metabolism; hydrogen sulfide biosynthesis; sulfite from sulfate: step 1/3. The sequence is that of Sulfate adenylyltransferase from Hyperthermus butylicus (strain DSM 5456 / JCM 9403 / PLM1-5).